The sequence spans 441 residues: Serine/threonine-protein kinase prk-2 (441 aa).

In terms of domain architecture, Protein kinase spans 31-285 (YKLKAELGRG…LEAILNHPWV (255 aa)). ATP is bound by residues 37–45 (LGRGGFGVV) and K60. Residue D158 is the Proton acceptor of the active site. Residues 301–364 (QKKTSESSDD…NQKKPNHKEF (64 aa)) form a disordered region. Basic and acidic residues predominate over residues 303–320 (KTSESSDDHHSETLGDHS). Residues 328 to 338 (PPTSSVSQQPG) show a composition bias toward polar residues.

This sequence belongs to the protein kinase superfamily. Ser/Thr protein kinase family. PIM subfamily. Requires Mg(2+) as cofactor.

The catalysed reaction is L-seryl-[protein] + ATP = O-phospho-L-seryl-[protein] + ADP + H(+). The enzyme catalyses L-threonyl-[protein] + ATP = O-phospho-L-threonyl-[protein] + ADP + H(+). Functionally, involved in the negative regulation of synaptic differentiation in PLM neurons. The protein is Serine/threonine-protein kinase prk-2 of Caenorhabditis elegans.